The primary structure comprises 141 residues: Nucleoside diphosphate kinase (141 aa).

Residues lysine 11, phenylalanine 59, arginine 87, threonine 93, arginine 104, and asparagine 114 each coordinate ATP. The Pros-phosphohistidine intermediate role is filled by histidine 117.

It belongs to the NDK family. Homotetramer. Requires Mg(2+) as cofactor.

It localises to the cytoplasm. The catalysed reaction is a 2'-deoxyribonucleoside 5'-diphosphate + ATP = a 2'-deoxyribonucleoside 5'-triphosphate + ADP. It catalyses the reaction a ribonucleoside 5'-diphosphate + ATP = a ribonucleoside 5'-triphosphate + ADP. Major role in the synthesis of nucleoside triphosphates other than ATP. The ATP gamma phosphate is transferred to the NDP beta phosphate via a ping-pong mechanism, using a phosphorylated active-site intermediate. The sequence is that of Nucleoside diphosphate kinase from Cupriavidus metallidurans (strain ATCC 43123 / DSM 2839 / NBRC 102507 / CH34) (Ralstonia metallidurans).